Reading from the N-terminus, the 312-residue chain is Isethionate sulfite-lyase activating enzyme (312 aa).

The Radical SAM core domain maps to 22–309 (HDGPGIRTIV…VDETRGAVTE (288 aa)). Cys-36, Cys-40, Cys-43, Cys-62, Cys-65, Cys-68, Cys-72, Cys-92, Cys-95, Cys-100, and Cys-104 together coordinate [4Fe-4S] cluster. 42-44 (WCS) contacts S-adenosyl-L-methionine. 2 consecutive 4Fe-4S ferredoxin-type domains span residues 53–82 (PQVAYNKGRCIGCHRCIKACEHDAITVNED) and 83–115 (GTLSLDRGKCDVCKTLDCAHACPAQGMIIYGEN). S-adenosyl-L-methionine contacts are provided by residues Gly-144, 193-195 (DVK), and His-267.

Belongs to the organic radical-activating enzymes family. Monomer. [4Fe-4S] cluster serves as cofactor.

The enzyme catalyses glycyl-[protein] + reduced [flavodoxin] + S-adenosyl-L-methionine = glycin-2-yl radical-[protein] + semiquinone [flavodoxin] + 5'-deoxyadenosine + L-methionine + H(+). The protein operates within organosulfur degradation; alkanesulfonate degradation. Its function is as follows. Involved in an anaerobic respiration pathway that converts the sulfonate taurine (2-aminoethanesulfonate) to ammonia, acetate and sulfide. Catalyzes activation of the isethionate sulfite-lyase IslA under anaerobic conditions by generation of an organic free radical on a glycine residue, via a homolytic cleavage of S-adenosyl-L-methionine (SAM). The protein is Isethionate sulfite-lyase activating enzyme of Bilophila wadsworthia (strain 3_1_6).